Here is a 187-residue protein sequence, read N- to C-terminus: Elongation factor P (187 aa).

It belongs to the elongation factor P family.

Its subcellular location is the cytoplasm. Its pathway is protein biosynthesis; polypeptide chain elongation. In terms of biological role, involved in peptide bond synthesis. Stimulates efficient translation and peptide-bond synthesis on native or reconstituted 70S ribosomes in vitro. Probably functions indirectly by altering the affinity of the ribosome for aminoacyl-tRNA, thus increasing their reactivity as acceptors for peptidyl transferase. The sequence is that of Elongation factor P from Corynebacterium glutamicum (strain R).